The chain runs to 184 residues: Adenine phosphoribosyltransferase (184 aa).

This sequence belongs to the purine/pyrimidine phosphoribosyltransferase family. In terms of assembly, homodimer.

Its subcellular location is the cytoplasm. It catalyses the reaction AMP + diphosphate = 5-phospho-alpha-D-ribose 1-diphosphate + adenine. Its pathway is purine metabolism; AMP biosynthesis via salvage pathway; AMP from adenine: step 1/1. Catalyzes a salvage reaction resulting in the formation of AMP, that is energically less costly than de novo synthesis. This chain is Adenine phosphoribosyltransferase, found in Acidovorax sp. (strain JS42).